The primary structure comprises 296 residues: Lipoyl synthase (296 aa).

7 residues coordinate [4Fe-4S] cluster: C37, C42, C48, C63, C67, C70, and S276. Residues 49 to 265 enclose the Radical SAM core domain; the sequence is WSKKHTTVMI…ERLAKTKGFL (217 aa).

It belongs to the radical SAM superfamily. Lipoyl synthase family. Requires [4Fe-4S] cluster as cofactor.

The protein localises to the cytoplasm. The catalysed reaction is [[Fe-S] cluster scaffold protein carrying a second [4Fe-4S](2+) cluster] + N(6)-octanoyl-L-lysyl-[protein] + 2 oxidized [2Fe-2S]-[ferredoxin] + 2 S-adenosyl-L-methionine + 4 H(+) = [[Fe-S] cluster scaffold protein] + N(6)-[(R)-dihydrolipoyl]-L-lysyl-[protein] + 4 Fe(3+) + 2 hydrogen sulfide + 2 5'-deoxyadenosine + 2 L-methionine + 2 reduced [2Fe-2S]-[ferredoxin]. It participates in protein modification; protein lipoylation via endogenous pathway; protein N(6)-(lipoyl)lysine from octanoyl-[acyl-carrier-protein]: step 2/2. Its function is as follows. Catalyzes the radical-mediated insertion of two sulfur atoms into the C-6 and C-8 positions of the octanoyl moiety bound to the lipoyl domains of lipoate-dependent enzymes, thereby converting the octanoylated domains into lipoylated derivatives. In Rickettsia rickettsii (strain Iowa), this protein is Lipoyl synthase.